A 354-amino-acid chain; its full sequence is Guanine nucleotide-binding protein subunit alpha-14 (354 aa).

The region spanning 33–354 is the G-alpha domain; sequence RELKLLLLGT…QLNLREFNLV (322 aa). Positions 36–49 are G1 motif; the sequence is KLLLLGTGESGKST. GTP contacts are provided by residues 41 to 48, 175 to 181, 200 to 204, 269 to 272, and alanine 326; these read GTGESGKS, LRVRVPT, DVGGQ, and NKKD. The Mg(2+) site is built by serine 48 and threonine 181. Residues 173-181 form a G2 motif region; that stretch reads DVLRVRVPT. The segment at 196 to 205 is G3 motif; the sequence is FRMVDVGGQR. Positions 265–272 are G4 motif; it reads ILFLNKKD. The segment at 324–329 is G5 motif; that stretch reads TCATDT.

The protein belongs to the G-alpha family. G(q) subfamily. In terms of assembly, g proteins are composed of 3 units; alpha, beta and gamma. The alpha chain contains the guanine nucleotide binding site.

Functionally, guanine nucleotide-binding proteins (G proteins) are involved as modulators or transducers in various transmembrane signaling systems. Acts as an activator of phospholipase C. Mediates responses to trypsin. This chain is Guanine nucleotide-binding protein subunit alpha-14 (gna14), found in Xenopus laevis (African clawed frog).